The sequence spans 205 residues: SREBP regulating gene protein (205 aa).

Residues 1–16 (MLNLAALLWRRLLRKR) lie on the Cytoplasmic side of the membrane. The helical transmembrane segment at 17–35 (WVLALVFGLSLVYFLSSTF) threads the bilayer. At 36–205 (KQEERAVRDR…GESPPELFPA (170 aa)) the chain is on the lumenal side. The N-linked (GlcNAc...) asparagine glycan is linked to Asn-67.

The protein belongs to the SPRING family. Interacts with SCAP. In terms of tissue distribution, ubiquitously expressed with a slightly higher expression in the liver and kidney.

It is found in the golgi apparatus membrane. In terms of biological role, positively regulates hepatic SREBP signaling pathway by modulating the proper localization of SCAP (SREBP cleavage-activating protein) to the endoplasmic reticulum, thereby controlling the level of functional SCAP. Plays a crucial role during embryogenesis. This chain is SREBP regulating gene protein (Spring1), found in Mus musculus (Mouse).